The sequence spans 215 residues: Pyrrolidone-carboxylate peptidase (215 aa).

Residues E80, C143, and H167 contribute to the active site.

Belongs to the peptidase C15 family. As to quaternary structure, homotetramer.

The protein localises to the cytoplasm. It catalyses the reaction Release of an N-terminal pyroglutamyl group from a polypeptide, the second amino acid generally not being Pro.. Removes 5-oxoproline from various penultimate amino acid residues except L-proline. The polypeptide is Pyrrolidone-carboxylate peptidase (Bacillus cereus (strain Q1)).